A 114-amino-acid chain; its full sequence is Lymphotactin (114 aa).

Positions 1–21 (MRLLILALLGICSLTAYIVEG) are cleaved as a signal peptide. Cysteine 32 and cysteine 69 are disulfide-bonded. Residues 91 to 114 (RNNMIQTKPTGTQQSTNTAVTLTG) form a disordered region.

It belongs to the intercrine gamma family. As to expression, highest level in spleen, lower in peripheral leukocytes and very low levels in lung, colon and small intestine.

The protein resides in the secreted. Chemotactic activity for lymphocytes but not for monocytes or neutrophils. In thymus, mediates medullary accumulation of thymic dendritic cells and contributes to regulatoy T cell development, playing a role in self-tolerance establishment. The sequence is that of Lymphotactin (XCL1) from Homo sapiens (Human).